The following is a 176-amino-acid chain: NAD(P)H-quinone oxidoreductase subunit J (176 aa).

This sequence belongs to the complex I 30 kDa subunit family. In terms of assembly, NDH-1 can be composed of about 15 different subunits; different subcomplexes with different compositions have been identified which probably have different functions.

It is found in the cellular thylakoid membrane. It carries out the reaction a plastoquinone + NADH + (n+1) H(+)(in) = a plastoquinol + NAD(+) + n H(+)(out). The enzyme catalyses a plastoquinone + NADPH + (n+1) H(+)(in) = a plastoquinol + NADP(+) + n H(+)(out). NDH-1 shuttles electrons from an unknown electron donor, via FMN and iron-sulfur (Fe-S) centers, to quinones in the respiratory and/or the photosynthetic chain. The immediate electron acceptor for the enzyme in this species is believed to be plastoquinone. Couples the redox reaction to proton translocation, and thus conserves the redox energy in a proton gradient. Cyanobacterial NDH-1 also plays a role in inorganic carbon-concentration. The polypeptide is NAD(P)H-quinone oxidoreductase subunit J (Prochlorococcus marinus (strain MIT 9515)).